We begin with the raw amino-acid sequence, 183 residues long: Peptide deformylase (183 aa).

Fe cation-binding residues include cysteine 90 and histidine 132. The active site involves glutamate 133. Histidine 136 is a Fe cation binding site.

Belongs to the polypeptide deformylase family. It depends on Fe(2+) as a cofactor.

The enzyme catalyses N-terminal N-formyl-L-methionyl-[peptide] + H2O = N-terminal L-methionyl-[peptide] + formate. Its function is as follows. Removes the formyl group from the N-terminal Met of newly synthesized proteins. Requires at least a dipeptide for an efficient rate of reaction. N-terminal L-methionine is a prerequisite for activity but the enzyme has broad specificity at other positions. The protein is Peptide deformylase of Parafrankia sp. (strain EAN1pec).